Consider the following 276-residue polypeptide: Small ribosomal subunit protein uS2 (276 aa).

The disordered stretch occupies residues 255–276 (ASATATAAPTEAGAPEPTTDPS).

It belongs to the universal ribosomal protein uS2 family.

This chain is Small ribosomal subunit protein uS2, found in Mycolicibacterium paratuberculosis (strain ATCC BAA-968 / K-10) (Mycobacterium paratuberculosis).